A 131-amino-acid polypeptide reads, in one-letter code: Acanthoscurrin-2 (131 aa).

A Lysine amide modification is found at lysine 130.

As to expression, expressed in hemocytes and secreted into the plasma following bacterial immune challenge.

The protein resides in the secreted. In terms of biological role, antimicrobial protein. Strong activity against the Gram-negative bacterium E.coli SBS363 and yeast C.albicans. No detectable activity against the Gram-positive bacterium M.luteus. The protein is Acanthoscurrin-2 of Acanthoscurria gomesiana (Tarantula spider).